Reading from the N-terminus, the 790-residue chain is LPS-assembly protein LptD (790 aa).

The N-terminal stretch at 1–20 (MRMLRWLILSAFSVAGAVQA) is a signal peptide.

Belongs to the LptD family. As to quaternary structure, component of the lipopolysaccharide transport and assembly complex. Interacts with LptE and LptA.

Its subcellular location is the cell outer membrane. In terms of biological role, together with LptE, is involved in the assembly of lipopolysaccharide (LPS) at the surface of the outer membrane. In Bordetella parapertussis (strain 12822 / ATCC BAA-587 / NCTC 13253), this protein is LPS-assembly protein LptD.